Here is a 142-residue protein sequence, read N- to C-terminus: MDMVSPVLNLQSSILGELVGIIGKVFFLLIEEIKYPIITPKIIVDAQISSWSLFFFASICNLSAKFREPIVTTSSIISLMESEKDLKNVNEYFQIMAKMLFILENKIVVSLFVVFNISVLIIVKSEPYSYGKVLFKPSSSIF.

Residues 1–9 (MDMVSPVLN) are Cytoplasmic-facing. A helical membrane pass occupies residues 10–30 (LQSSILGELVGIIGKVFFLLI). Topologically, residues 31–41 (EEIKYPIITPK) are extracellular. A helical membrane pass occupies residues 42-62 (IIVDAQISSWSLFFFASICNL). The Cytoplasmic portion of the chain corresponds to 63–101 (SAKFREPIVTTSSIISLMESEKDLKNVNEYFQIMAKMLF). The chain crosses the membrane as a helical span at residues 102-122 (ILENKIVVSLFVVFNISVLII). At 123–142 (VKSEPYSYGKVLFKPSSSIF) the chain is on the extracellular side.

It is found in the membrane. This is an uncharacterized protein from Saccharomyces cerevisiae (strain ATCC 204508 / S288c) (Baker's yeast).